The sequence spans 819 residues: Plastid division protein CDP1, chloroplastic (819 aa).

Residues 1–76 constitute a chloroplast transit peptide; it reads MPVAYTFPVL…NAAGGGIHVV (76 aa). At 77-572 the chain is on the stromal side; that stretch reads DNAPSRTSSL…NKIWDEWLSQ (496 aa). A coiled-coil region spans residues 419–439; that stretch reads EAEALEKLKQLESNSDSAVRN. A helical transmembrane segment spans residues 573–593; sequence SSLIGRVSVVALLGCTVFFSL. At 594–819 the chain is on the chloroplast intermembrane side; it reads KLSGIRSGRL…FCQSDIQIQK (226 aa). Positions 762–782 form a coiled coil; the sequence is IAGEAAEIEALLEEAAELVDE.

Self-interacts. Interacts (via N-terminus) with ARC3 (via MORN domains). Binds (via N-terminus) to FTSZ2 proteins, FTSZ2-1 and FTSZ2-2. Recruited ARC3 to the middle of the plastid where subsequent complex made of CDP1/PARC6, ARC3 and FtsZ proteins can form; this complex enhances the dynamics of Z rings during chloroplast division. Interacts (via C-terminus) with PDV1 (via C-terminus). Interacts with MIND1. In terms of tissue distribution, exclusively expressed in young green tissues such as young cotyledons, shoot apex, emerging leaves and budding inflorescence.

It localises to the plastid. The protein localises to the chloroplast inner membrane. In terms of biological role, component of the plastid division machinery required for PDV1 localization to constriction sites. Involved in chloroplast division site placement. Required for the proper formation of FtsZ rings at the division site in nongreen plastids (e.g. etioplasts). Inhibits FtsZ assembly, functioning as an antagonistic regulator of FtsZ dynamics against ARC6, by recruiting ARC3 to the middle of the plastid to facilitate its interaction with FtsZ proteins. Required during stromule biogenesis in the leaf epidermis, especially in non-mesophyll cells plastids. The sequence is that of Plastid division protein CDP1, chloroplastic from Arabidopsis thaliana (Mouse-ear cress).